Reading from the N-terminus, the 177-residue chain is Large ribosomal subunit protein uL6 (177 aa).

This sequence belongs to the universal ribosomal protein uL6 family. In terms of assembly, part of the 50S ribosomal subunit.

Its function is as follows. This protein binds to the 23S rRNA, and is important in its secondary structure. It is located near the subunit interface in the base of the L7/L12 stalk, and near the tRNA binding site of the peptidyltransferase center. In Marinomonas sp. (strain MWYL1), this protein is Large ribosomal subunit protein uL6.